Here is a 676-residue protein sequence, read N- to C-terminus: Envelope glycoprotein (676 aa).

Residues 1 to 34 (MACSTLSKSPKDKIDPRDLLIPLILFLSLKGARS) form the signal peptide. The receptor-binding domain (RBD) stretch occupies residues 35–270 (AAPGSSPHQV…KYQNLGPRVP (236 aa)). Topologically, residues 35 to 620 (AAPGSSPHQV…FNRSPWFTTL (586 aa)) are extracellular. A glycan (N-linked (GlcNAc...) asparagine; by host) is linked at N46. Cystine bridges form between C80–C132, C106–C121, C107–C117, C155–C175, and C167–C180. H89 is a binding site for Zn(2+). Zn(2+) is bound at residue D120. A glycan (N-linked (GlcNAc...) asparagine; by host) is linked at N202. C212 and C218 are oxidised to a cystine. Residues 287–322 (NPLPKPAKSPSASNSTPTLISPSPAPTQPPPAGTGD) form a disordered region. Low complexity predominate over residues 294-308 (KSPSASNSTPTLISP). Pro residues predominate over residues 309 to 318 (SPAPTQPPPA). N336 is a glycosylation site (N-linked (GlcNAc...) asparagine; by host). Cystine bridges form between C346–C349, C346–C573, C376–C430, C395–C407, C437–C450, and C565–C572. Positions 346-349 (CWLC) match the CXXC motif. N-linked (GlcNAc...) asparagine; by host glycans are attached at residues N368 and N375. N408 and N444 each carry an N-linked (GlcNAc...) asparagine; by host glycan. Residues 482–502 (VSLTLALLLGGLTMGGIAAGV) are fusion peptide. Positions 513-547 (QQFQQLHAAVQDDLKEVEKSITNLEKSLTSLSEVV) form a coiled coil. The tract at residues 548–564 (LQNRRGLDLLFLKEGGL) is immunosuppression. The CX6CC signature appears at 565 to 573 (CAALKEECC). A helical membrane pass occupies residues 621 to 641 (ISTIMGPLIILLLILLFGPCI). C640 carries S-palmitoyl cysteine; by host lipidation. Topologically, residues 642-676 (LNRLVQFVKDRISVVQALVLTQQYHQLKPLEYEPQ) are cytoplasmic. The YXXL motif; contains endocytosis signal motif lies at 665–668 (YHQL).

In terms of assembly, the mature envelope protein (Env) consists of a trimer of SU-TM heterodimers attached by a labile interchain disulfide bond. Post-translationally, specific enzymatic cleavages in vivo yield mature proteins. Envelope glycoproteins are synthesized as an inactive precursor that is N-glycosylated and processed likely by host cell furin or by a furin-like protease in the Golgi to yield the mature SU and TM proteins. The cleavage site between SU and TM requires the minimal sequence [KR]-X-[KR]-R. The R-peptide is released from the C-terminus of the cytoplasmic tail of the TM protein upon particle formation as a result of proteolytic cleavage by the viral protease. Cleavage of this peptide is required for TM to become fusogenic. In terms of processing, the CXXC motif is highly conserved across a broad range of retroviral envelope proteins. It is thought to participate in the formation of a labile disulfide bond possibly with the CX6CC motif present in the transmembrane protein. Isomerization of the intersubunit disulfide bond to an SU intrachain disulfide bond is thought to occur upon receptor recognition in order to allow membrane fusion. The transmembrane protein is palmitoylated. Post-translationally, the R-peptide is palmitoylated.

The protein resides in the virion membrane. It localises to the host cell membrane. The surface protein (SU) attaches the virus to the host cell by binding to its receptor. This interaction triggers the refolding of the transmembrane protein (TM) and is thought to activate its fusogenic potential by unmasking its fusion peptide. Fusion occurs at the host cell plasma membrane. Functionally, the transmembrane protein (TM) acts as a class I viral fusion protein. Under the current model, the protein has at least 3 conformational states: pre-fusion native state, pre-hairpin intermediate state, and post-fusion hairpin state. During viral and target cell membrane fusion, the coiled coil regions (heptad repeats) assume a trimer-of-hairpins structure, positioning the fusion peptide in close proximity to the C-terminal region of the ectodomain. The formation of this structure appears to drive apposition and subsequent fusion of viral and target cell membranes. Membranes fusion leads to delivery of the nucleocapsid into the cytoplasm. This chain is Envelope glycoprotein (env), found in Mus musculus (Mouse).